Reading from the N-terminus, the 163-residue chain is MISTPEPLHAGHILTPFCCGVDSIDNWLEQRAMKNQTTGASRTFVCCGSDSNVLAYYSLASSAVTTNTSPGRFRRNMPDPIPVVVLGRLAVDKSLHGQGVARALVRDAGLRVIQVAETIGIRGMLVHALSDEAREFYQRVGFVPSPMDPMMLMVTLGDLVESV.

Residues leucine 89, valine 91, histidine 96, glycine 97, glutamine 98, glycine 99, alanine 101, arginine 102, and glutamate 132 each coordinate acetyl-CoA. Tyrosine 137 is an active-site residue. Arginine 139 is a binding site for acetyl-CoA.

The protein belongs to the acetyltransferase family. GNAT subfamily. As to quaternary structure, homodimer (in absence of antitoxin). Forms a complex with cognate antitoxin TacA2. Forms a 4:2 antitoxin:toxin complex with cognate antitoxin TacA2.

It carries out the reaction glycyl-tRNA(Gly) + acetyl-CoA = N-acetylglycyl-tRNA(Gly) + CoA + H(+). Functionally, toxic component of a type II toxin-antitoxin (TA) system. Acetylates tRNA and inhibits translation. Acetylates exclusively Gly in situ. Overexpression during the lag phase of a tacA2-tacT2 deletion strain leads to very small increase in persister cells in the presence of cefotaxime but no detectable growth phenotype in absence of antibiotics. Compared to a protein with a single amino acid change (TacT2 from S.enterica NCTC 13349, Glu-29 is Lys in NCTC 13349) this protein binds tRNA very poorly and acetylates tRNA very poorly. Persister cell formation is neutralized by cognate antitoxin TacA2. Neutralized only by cognate antitoxin TacA2 (A8), but not by TacA1 or TacA3. Plays a role in persister cell formation. In terms of biological role, the TacA2-TacT2 complex both represses and derepresses expression of its own operon. The chain is tRNA-acetylating toxin 2 from Salmonella typhimurium (strain 14028s / SGSC 2262).